Here is a 450-residue protein sequence, read N- to C-terminus: Putative cysteine--tRNA ligase 2 (450 aa).

The 'HIGH' region signature appears at 29–39; it reads ITPYKSTHLGH. The 'KMSKS' region motif lies at 270-274; it reads KMSKS. ATP is bound at residue K273. Positions 372–392 are disordered; that stretch reads PIHPKHSPQMRDYSEHGSAGQ.

It belongs to the class-I aminoacyl-tRNA synthetase family. In terms of assembly, monomer.

The protein localises to the cytoplasm. It catalyses the reaction tRNA(Cys) + L-cysteine + ATP = L-cysteinyl-tRNA(Cys) + AMP + diphosphate. This Tropheryma whipplei (strain TW08/27) (Whipple's bacillus) protein is Putative cysteine--tRNA ligase 2 (cysS2).